The following is a 465-amino-acid chain: UDP-N-acetylmuramate--L-alanine ligase (465 aa).

112–118 (GTHGKTT) is a binding site for ATP.

It belongs to the MurCDEF family.

It is found in the cytoplasm. The enzyme catalyses UDP-N-acetyl-alpha-D-muramate + L-alanine + ATP = UDP-N-acetyl-alpha-D-muramoyl-L-alanine + ADP + phosphate + H(+). It participates in cell wall biogenesis; peptidoglycan biosynthesis. Its function is as follows. Cell wall formation. This Janthinobacterium sp. (strain Marseille) (Minibacterium massiliensis) protein is UDP-N-acetylmuramate--L-alanine ligase.